The chain runs to 330 residues: tRNA (guanine(37)-N(1))-methyltransferase Trm5b (330 aa).

S-adenosyl-L-methionine-binding positions include arginine 173, 211–212 (DI), 238–239 (DS), and asparagine 252.

This sequence belongs to the class I-like SAM-binding methyltransferase superfamily. TRM5/TYW2 family.

The protein localises to the cytoplasm. The enzyme catalyses guanosine(37) in tRNA + S-adenosyl-L-methionine = N(1)-methylguanosine(37) in tRNA + S-adenosyl-L-homocysteine + H(+). Its function is as follows. Specifically methylates the N1 position of guanosine-37 in various tRNAs. The polypeptide is tRNA (guanine(37)-N(1))-methyltransferase Trm5b (Pyrococcus abyssi (strain GE5 / Orsay)).